We begin with the raw amino-acid sequence, 368 residues long: Carbamoyl phosphate synthase small chain (368 aa).

Residues 1 to 178 (MKAVLGLEDG…GAAGAWKGSG (178 aa)) are CPSase. The L-glutamine site is built by Ser45, Gly230, and Gly232. The 187-residue stretch at 182–368 (HAVVVDLGIK…KVVKVLGGGL (187 aa)) folds into the Glutamine amidotransferase type-1 domain. Cys257 (nucleophile) is an active-site residue. Residues Phe258, Gln261, Asn299, Gly301, and Tyr302 each coordinate L-glutamine. Residues His342 and Glu344 contribute to the active site.

This sequence belongs to the CarA family. As to quaternary structure, composed of two chains; the small (or glutamine) chain promotes the hydrolysis of glutamine to ammonia, which is used by the large (or ammonia) chain to synthesize carbamoyl phosphate. Tetramer of heterodimers (alpha,beta)4.

It catalyses the reaction hydrogencarbonate + L-glutamine + 2 ATP + H2O = carbamoyl phosphate + L-glutamate + 2 ADP + phosphate + 2 H(+). It carries out the reaction L-glutamine + H2O = L-glutamate + NH4(+). The protein operates within amino-acid biosynthesis; L-arginine biosynthesis; carbamoyl phosphate from bicarbonate: step 1/1. It functions in the pathway pyrimidine metabolism; UMP biosynthesis via de novo pathway; (S)-dihydroorotate from bicarbonate: step 1/3. Functionally, small subunit of the glutamine-dependent carbamoyl phosphate synthetase (CPSase). CPSase catalyzes the formation of carbamoyl phosphate from the ammonia moiety of glutamine, carbonate, and phosphate donated by ATP, constituting the first step of 2 biosynthetic pathways, one leading to arginine and/or urea and the other to pyrimidine nucleotides. The small subunit (glutamine amidotransferase) binds and cleaves glutamine to supply the large subunit with the substrate ammonia. This chain is Carbamoyl phosphate synthase small chain, found in Methanosarcina mazei (strain ATCC BAA-159 / DSM 3647 / Goe1 / Go1 / JCM 11833 / OCM 88) (Methanosarcina frisia).